A 269-amino-acid polypeptide reads, in one-letter code: Ubiquinone/menaquinone biosynthesis C-methyltransferase UbiE (269 aa).

Residues threonine 92, aspartate 113, and 141–142 (NA) contribute to the S-adenosyl-L-methionine site.

The protein belongs to the class I-like SAM-binding methyltransferase superfamily. MenG/UbiE family.

The enzyme catalyses a 2-demethylmenaquinol + S-adenosyl-L-methionine = a menaquinol + S-adenosyl-L-homocysteine + H(+). The catalysed reaction is a 2-methoxy-6-(all-trans-polyprenyl)benzene-1,4-diol + S-adenosyl-L-methionine = a 5-methoxy-2-methyl-3-(all-trans-polyprenyl)benzene-1,4-diol + S-adenosyl-L-homocysteine + H(+). The protein operates within quinol/quinone metabolism; menaquinone biosynthesis; menaquinol from 1,4-dihydroxy-2-naphthoate: step 2/2. It functions in the pathway cofactor biosynthesis; ubiquinone biosynthesis. In terms of biological role, methyltransferase required for the conversion of demethylmenaquinol (DMKH2) to menaquinol (MKH2) and the conversion of 2-polyprenyl-6-methoxy-1,4-benzoquinol (DDMQH2) to 2-polyprenyl-3-methyl-6-methoxy-1,4-benzoquinol (DMQH2). The polypeptide is Ubiquinone/menaquinone biosynthesis C-methyltransferase UbiE (Brucella suis (strain ATCC 23445 / NCTC 10510)).